The following is a 122-amino-acid chain: Large ribosomal subunit protein uL14 (122 aa).

It belongs to the universal ribosomal protein uL14 family. In terms of assembly, part of the 50S ribosomal subunit. Forms a cluster with proteins L3 and L19. In the 70S ribosome, L14 and L19 interact and together make contacts with the 16S rRNA in bridges B5 and B8.

In terms of biological role, binds to 23S rRNA. Forms part of two intersubunit bridges in the 70S ribosome. In Bacillus mycoides (strain KBAB4) (Bacillus weihenstephanensis), this protein is Large ribosomal subunit protein uL14.